We begin with the raw amino-acid sequence, 294 residues long: tRNA dimethylallyltransferase (294 aa).

10 to 17 serves as a coordination point for ATP; it reads GPTAVGKT. 12 to 17 provides a ligand contact to substrate; the sequence is TAVGKT. Residues 35–38 form an interaction with substrate tRNA region; the sequence is DSQQ.

It belongs to the IPP transferase family. As to quaternary structure, monomer. Mg(2+) serves as cofactor.

It carries out the reaction adenosine(37) in tRNA + dimethylallyl diphosphate = N(6)-dimethylallyladenosine(37) in tRNA + diphosphate. Functionally, catalyzes the transfer of a dimethylallyl group onto the adenine at position 37 in tRNAs that read codons beginning with uridine, leading to the formation of N6-(dimethylallyl)adenosine (i(6)A). The protein is tRNA dimethylallyltransferase of Streptococcus mutans serotype c (strain ATCC 700610 / UA159).